A 394-amino-acid chain; its full sequence is Ornithine aminotransferase 1 (394 aa).

Residue lysine 252 is modified to N6-(pyridoxal phosphate)lysine.

The protein belongs to the class-III pyridoxal-phosphate-dependent aminotransferase family. OAT subfamily. It depends on pyridoxal 5'-phosphate as a cofactor.

The protein localises to the cytoplasm. The catalysed reaction is a 2-oxocarboxylate + L-ornithine = L-glutamate 5-semialdehyde + an L-alpha-amino acid. The protein operates within amino-acid biosynthesis; L-proline biosynthesis; L-glutamate 5-semialdehyde from L-ornithine: step 1/1. In terms of biological role, catalyzes the interconversion of ornithine to glutamate semialdehyde. This is Ornithine aminotransferase 1 from Staphylococcus saprophyticus subsp. saprophyticus (strain ATCC 15305 / DSM 20229 / NCIMB 8711 / NCTC 7292 / S-41).